We begin with the raw amino-acid sequence, 351 residues long: UPF0104 membrane protein MTH_887 (351 aa).

Transmembrane regions (helical) follow at residues 20 to 40 (IVLS…FAGF), 51 to 71 (SPYF…LWTL), 137 to 157 (VFEF…IMTW), 165 to 185 (IVVS…VYAG), 244 to 264 (FVIG…RLYV), 275 to 295 (AVPL…PILP), 304 to 324 (ILVG…AASV), and 328 to 348 (IASY…YGKQ).

This sequence belongs to the UPF0104 family.

It localises to the cell membrane. The protein is UPF0104 membrane protein MTH_887 of Methanothermobacter thermautotrophicus (strain ATCC 29096 / DSM 1053 / JCM 10044 / NBRC 100330 / Delta H) (Methanobacterium thermoautotrophicum).